The primary structure comprises 205 residues: Isochorismatase domain-containing protein 2 (205 aa).

Phosphoserine occurs at positions 7 and 202.

Belongs to the isochorismatase family. Interacts with CDKN2A.

Its subcellular location is the cytoplasm. It localises to the nucleus. The chain is Isochorismatase domain-containing protein 2 (ISOC2) from Pongo abelii (Sumatran orangutan).